The following is a 351-amino-acid chain: D-alanine--D-alanine ligase (351 aa).

The region spanning 135–343 (NQIFLQSGQK…MEEVFSDLIE (209 aa)) is the ATP-grasp domain. 167–222 (LETLGFPQFLKPVEGGSSVSVYKITNREQLKEKLALIFESDSKVMSQSFLTGIEVS) provides a ligand contact to ATP. Positions 298, 310, and 312 each coordinate Mg(2+).

Belongs to the D-alanine--D-alanine ligase family. Mg(2+) is required as a cofactor. Mn(2+) serves as cofactor.

It localises to the cytoplasm. The enzyme catalyses 2 D-alanine + ATP = D-alanyl-D-alanine + ADP + phosphate + H(+). It functions in the pathway cell wall biogenesis; peptidoglycan biosynthesis. Functionally, cell wall formation. In Leptospira interrogans serogroup Icterohaemorrhagiae serovar copenhageni (strain Fiocruz L1-130), this protein is D-alanine--D-alanine ligase.